The primary structure comprises 166 residues: Endoribonuclease YbeY (166 aa).

Positions 131, 135, and 141 each coordinate Zn(2+).

Belongs to the endoribonuclease YbeY family. It depends on Zn(2+) as a cofactor.

It is found in the cytoplasm. Single strand-specific metallo-endoribonuclease involved in late-stage 70S ribosome quality control and in maturation of the 3' terminus of the 16S rRNA. The chain is Endoribonuclease YbeY from Dehalococcoides mccartyi (strain CBDB1).